The primary structure comprises 827 residues: Periplasmic nitrate reductase (827 aa).

Residues 1-32 constitute a signal peptide (tat-type signal); the sequence is MELSRRDFMKANAAVAAAAAAGIVLPVKNVQA. A 4Fe-4S Mo/W bis-MGD-type domain is found at 37 to 93; the sequence is IKWDKAPCRFCGTGCSVLVGTKDGRVVATQGDPDAEVNRGLNCIKGYFLSKIMYGAD. Positions 44, 47, 51, and 79 each coordinate [4Fe-4S] cluster. Residues K81, Q148, N173, C177, 210-217, 241-245, M371, Q375, N481, 507-508, K530, D557, and 717-726 contribute to the Mo-bis(molybdopterin guanine dinucleotide) site; these read WGSNMAEM, STFEH, SD, and TGRVLEHWHT. F793 provides a ligand contact to substrate. Positions 801 and 818 each coordinate Mo-bis(molybdopterin guanine dinucleotide).

Belongs to the prokaryotic molybdopterin-containing oxidoreductase family. NasA/NapA/NarB subfamily. As to quaternary structure, component of the periplasmic nitrate reductase NapAB complex composed of NapA and NapB. Requires [4Fe-4S] cluster as cofactor. The cofactor is Mo-bis(molybdopterin guanine dinucleotide). Post-translationally, predicted to be exported by the Tat system. The position of the signal peptide cleavage has not been experimentally proven.

The protein resides in the periplasm. It carries out the reaction 2 Fe(II)-[cytochrome] + nitrate + 2 H(+) = 2 Fe(III)-[cytochrome] + nitrite + H2O. Its function is as follows. Catalytic subunit of the periplasmic nitrate reductase complex NapAB. Receives electrons from NapB and catalyzes the reduction of nitrate to nitrite. This chain is Periplasmic nitrate reductase, found in Haemophilus ducreyi (strain 35000HP / ATCC 700724).